The primary structure comprises 357 residues: S-adenosylmethionine:tRNA ribosyltransferase-isomerase (357 aa).

This sequence belongs to the QueA family. Monomer.

It is found in the cytoplasm. It catalyses the reaction 7-aminomethyl-7-carbaguanosine(34) in tRNA + S-adenosyl-L-methionine = epoxyqueuosine(34) in tRNA + adenine + L-methionine + 2 H(+). Its pathway is tRNA modification; tRNA-queuosine biosynthesis. Its function is as follows. Transfers and isomerizes the ribose moiety from AdoMet to the 7-aminomethyl group of 7-deazaguanine (preQ1-tRNA) to give epoxyqueuosine (oQ-tRNA). The polypeptide is S-adenosylmethionine:tRNA ribosyltransferase-isomerase (Buchnera aphidicola subsp. Schizaphis graminum (strain Sg)).